Reading from the N-terminus, the 90-residue chain is Probable Fe(2+)-trafficking protein (90 aa).

This sequence belongs to the Fe(2+)-trafficking protein family. Monomer.

In terms of biological role, could be a mediator in iron transactions between iron acquisition and iron-requiring processes, such as synthesis and/or repair of Fe-S clusters in biosynthetic enzymes. The chain is Probable Fe(2+)-trafficking protein from Sodalis glossinidius (strain morsitans).